Here is a 355-residue protein sequence, read N- to C-terminus: Ribosomal RNA small subunit methyltransferase H (355 aa).

S-adenosyl-L-methionine contacts are provided by residues G47–Y49, D65, F92, D113, and Q120. The segment at L332–R355 is disordered. Residues S346–R355 are compositionally biased toward basic residues.

The protein belongs to the methyltransferase superfamily. RsmH family.

The protein resides in the cytoplasm. It carries out the reaction cytidine(1402) in 16S rRNA + S-adenosyl-L-methionine = N(4)-methylcytidine(1402) in 16S rRNA + S-adenosyl-L-homocysteine + H(+). In terms of biological role, specifically methylates the N4 position of cytidine in position 1402 (C1402) of 16S rRNA. The chain is Ribosomal RNA small subunit methyltransferase H from Beijerinckia indica subsp. indica (strain ATCC 9039 / DSM 1715 / NCIMB 8712).